The chain runs to 599 residues: Aspartate--tRNA(Asp/Asn) ligase (599 aa).

Glu173 lines the L-aspartate pocket. An aspartate region spans residues 197 to 200 (QLYK). Arg219 provides a ligand contact to L-aspartate. Residues 219 to 221 (RDE) and Gln228 each bind ATP. His451 provides a ligand contact to L-aspartate. Glu484 is a binding site for ATP. Arg491 contributes to the L-aspartate binding site. ATP is bound at residue 536–539 (GLDR).

Belongs to the class-II aminoacyl-tRNA synthetase family. Type 1 subfamily. As to quaternary structure, homodimer.

The protein resides in the cytoplasm. It catalyses the reaction tRNA(Asx) + L-aspartate + ATP = L-aspartyl-tRNA(Asx) + AMP + diphosphate. In terms of biological role, aspartyl-tRNA synthetase with relaxed tRNA specificity since it is able to aspartylate not only its cognate tRNA(Asp) but also tRNA(Asn). Reaction proceeds in two steps: L-aspartate is first activated by ATP to form Asp-AMP and then transferred to the acceptor end of tRNA(Asp/Asn). This Methylococcus capsulatus (strain ATCC 33009 / NCIMB 11132 / Bath) protein is Aspartate--tRNA(Asp/Asn) ligase.